We begin with the raw amino-acid sequence, 281 residues long: Elongation factor Ts (281 aa).

The tract at residues 80–83 (TDFV) is involved in Mg(2+) ion dislocation from EF-Tu.

The protein belongs to the EF-Ts family.

Its subcellular location is the cytoplasm. In terms of biological role, associates with the EF-Tu.GDP complex and induces the exchange of GDP to GTP. It remains bound to the aminoacyl-tRNA.EF-Tu.GTP complex up to the GTP hydrolysis stage on the ribosome. The chain is Elongation factor Ts from Vibrio campbellii (strain ATCC BAA-1116).